A 363-amino-acid polypeptide reads, in one-letter code: MLIRLLLLVICLAGPGVAEEIRIKDLVRFDGVRGNDLLGYGLVVGLNGTGDGLRNAPFTEDIMSNLLERLGVNVTGEQYRPKNVAAVFVTATLPPFARAGAQIDVTVSAMGDAKSLLGGTLVMTPLNGADGQIYAVAQGTIIAGGVSAEGQAARVVQGVPTAGTIPEGARVEREVEFEFARLDRVRLALRSPDFTTAGRIEDRINRELGRGVATMLDAGTVSLDLGRLGPPARVMGRIENLEVVPETVARVVVDQRSGTIVMGEDVRISRVAVAQGGLTLRVEEQPMVVQPNPFSRGETVVVPRTTASIQQRPGTGLAEIPAETSLSRVVAGLNALGVAPNDMIDILKSIHAAGALHAEFIVR.

The N-terminal stretch at 1-18 is a signal peptide; it reads MLIRLLLLVICLAGPGVA.

Belongs to the FlgI family. As to quaternary structure, the basal body constitutes a major portion of the flagellar organelle and consists of four rings (L,P,S, and M) mounted on a central rod.

Its subcellular location is the periplasm. It localises to the bacterial flagellum basal body. Assembles around the rod to form the L-ring and probably protects the motor/basal body from shearing forces during rotation. This Cereibacter sphaeroides (strain ATCC 17023 / DSM 158 / JCM 6121 / CCUG 31486 / LMG 2827 / NBRC 12203 / NCIMB 8253 / ATH 2.4.1.) (Rhodobacter sphaeroides) protein is Flagellar P-ring protein 2.